Here is a 278-residue protein sequence, read N- to C-terminus: Probable endonuclease LCL3 (278 aa).

The helical transmembrane segment at Phe-15–Tyr-37 threads the bilayer. The TNase-like domain occupies Arg-58 to Gln-263. Arg-154 is a catalytic residue. Asp-159 provides a ligand contact to Ca(2+). Residues Glu-162 and Arg-202 contribute to the active site.

This sequence belongs to the LCL3 family.

The protein localises to the mitochondrion. It is found in the membrane. In Vanderwaltozyma polyspora (strain ATCC 22028 / DSM 70294 / BCRC 21397 / CBS 2163 / NBRC 10782 / NRRL Y-8283 / UCD 57-17) (Kluyveromyces polysporus), this protein is Probable endonuclease LCL3 (LCL3).